The following is a 492-amino-acid chain: NADH-quinone oxidoreductase subunit N (492 aa).

Helical transmembrane passes span 13–33 (MMTPEFIVLGTALILSLMDLF), 42–62 (PLAWIAFVGVAIALIATIGLI), 79–99 (FGKAFKLLLLAGGALSLLLAF), 111–131 (GEFYYLLLCALLGAMIMASSG), 133–153 (LITLFVGLELLSISSYILAGI), 168–188 (VINGGISTAITLFGMSYIFGL), 211–231 (YILAIAFLMMLVGLSFKISSV), 251–271 (FLSVVSKTAGFVIVLRLFITI), 284–304 (SLLFSMQDYIAFLAGATMIIG), 318–340 (FAYSSIAHAGYILVGFAAMSWVM), 344–366 (IWFYLLAYLFMNLGAFAILQRIS), 388–408 (AVAMGIFLLSLAGIPGTAGFI), 426–446 (VLAAVMIATTVVSYVYYFGIF), and 463–483 (PIGLAMVVVLCALGTLLFGVV).

This sequence belongs to the complex I subunit 2 family. In terms of assembly, NDH-1 is composed of 14 different subunits. Subunits NuoA, H, J, K, L, M, N constitute the membrane sector of the complex.

Its subcellular location is the cell membrane. It carries out the reaction a quinone + NADH + 5 H(+)(in) = a quinol + NAD(+) + 4 H(+)(out). NDH-1 shuttles electrons from NADH, via FMN and iron-sulfur (Fe-S) centers, to quinones in the respiratory chain. The immediate electron acceptor for the enzyme in this species is believed to be a menaquinone. Couples the redox reaction to proton translocation (for every two electrons transferred, four hydrogen ions are translocated across the cytoplasmic membrane), and thus conserves the redox energy in a proton gradient. This Geobacillus sp. (strain WCH70) protein is NADH-quinone oxidoreductase subunit N.